The primary structure comprises 129 residues: Ribosome-binding factor A (129 aa).

It belongs to the RbfA family. As to quaternary structure, monomer. Binds 30S ribosomal subunits, but not 50S ribosomal subunits or 70S ribosomes.

The protein resides in the cytoplasm. One of several proteins that assist in the late maturation steps of the functional core of the 30S ribosomal subunit. Associates with free 30S ribosomal subunits (but not with 30S subunits that are part of 70S ribosomes or polysomes). Required for efficient processing of 16S rRNA. May interact with the 5'-terminal helix region of 16S rRNA. This Pseudomonas aeruginosa (strain UCBPP-PA14) protein is Ribosome-binding factor A.